We begin with the raw amino-acid sequence, 648 residues long: Actin-related protein 5 (648 aa).

The segment at 34–59 is disordered; the sequence is LTKPRKDRKKEAAASEGSASQTTVEQ. Coiled-coil stretches lie at residues 277–311 and 340–364; these read TAEQKQEKRRELAHRLLDIKKNREQEKLREDEQQL and TLEDLDSLIATINSRIKRAQERAQS. Disordered regions lie at residues 357-385 and 403-455; these read RAQERAQSGPRPSKQQERLNKMPKPPEGM and GRKQ…GMND. Over residues 414–428 the composition is skewed to basic and acidic residues; sequence EQAKRHTHAAQERMR. A phosphoserine mark is found at Ser-471 and Ser-473.

This sequence belongs to the actin family. ARP5 subfamily. Component of the chromatin remodeling Ino80 complex.

The protein localises to the nucleus. In terms of biological role, proposed core component of the chromatin remodeling Ino80 complex which is involved in transcriptional regulation, DNA replication and probably DNA repair. The polypeptide is Actin-related protein 5 (Drosophila melanogaster (Fruit fly)).